A 741-amino-acid polypeptide reads, in one-letter code: Pentatricopeptide repeat-containing protein At3g58590 (741 aa).

PPR repeat units follow at residues 48-78, 79-113, 114-146, 148-178, 179-213, 214-248, 249-279, 280-314, 315-349, 350-380, 381-414, 415-445, 446-481, 483-508, 509-543, 544-578, 580-610, 611-645, 646-680, and 681-715; these read PVYV…MPER, NKVS…GYLP, NQST…GLFM, DAFV…MPFK, SLET…GASL, TESS…GLDC, EISV…AGSW, DIVS…GFSP, NQGT…GCET, GIVL…IRDK, NIVC…GFRP, TEYT…GYED, NDYV…SVVP, NIVA…LEQP, DTVS…NIRP, DKYT…DFSC, DTFV…TREK, NLIT…GFKP, DRVS…GVEP, and EMDH…ADAP.

The protein belongs to the PPR family. P subfamily.

The protein is Pentatricopeptide repeat-containing protein At3g58590 of Arabidopsis thaliana (Mouse-ear cress).